The following is a 435-amino-acid chain: AP-2 complex subunit mu (435 aa).

The MHD domain occupies 170–434 (RNELFLDVLE…IGRSGIYETR (265 aa)). A 1,2-diacyl-sn-glycero-3-phospho-(1D-myo-inositol-3,4,5-trisphosphate) contacts are provided by Lys-341, Lys-345, and Lys-354.

It belongs to the adaptor complexes medium subunit family. As to quaternary structure, adaptor protein complex 2 (AP-2) is a heterotetramer composed of two large adaptins (alpha-type subunit and beta-type subunit), a medium adaptin (mu-type subunit) and a small adaptin (sigma-type subunit).

The protein resides in the cell membrane. The protein localises to the membrane. It localises to the coated pit. Component of the adaptor complexes which link clathrin to receptors in coated vesicles. Clathrin-associated protein complexes are believed to interact with the cytoplasmic tails of membrane proteins, leading to their selection and concentration. AP50 is a subunit of the plasma membrane adaptor. The complex binds polyphosphoinositide-containing lipids. This Xenopus laevis (African clawed frog) protein is AP-2 complex subunit mu (ap2m1).